A 1025-amino-acid polypeptide reads, in one-letter code: METFTNDRLQLPRNMIENSMFEEEPDVVDLAKEPCLHPLEPDEVEYEPRGSRLLVRGLGEHEMDEDEEDYESSAKLLGMSFMNRSSGLRNSATGYRQSPDGTCSVPSARTLVICVFVIVVAVSVIMVIYLLPRCTFTKEGCHKTNQSAELIQPIATNGKVFPWAQIRLPTAIIPQRYELSLHPNLTSMTFRGSVTISLQALQDTRDIILHSTGHNISSVTFMSAVSSQEKQVEILEYPYHEQIAVVAPESLLTGHNYTLKIEYSANISNSYYGFYGITYTDKSNEKKNFAATQFEPLAARSAFPCFDEPAFKATFIIKITRDEHHTALSNMPKKSSVPTEEGLIQDEFSESVKMSTYLVAFIVGEMRNLSQDVNGTLVSVYAVPEKIDQVYHALDTTVKLLEFYQNYFEIQYPLKKLDLVAIPDFEAGAMENWGLLTFREETLLYDNATSSVADRKLVTKIIAHELAHQWFGNLVTMQWWNDLWLNEGFATFMEYFSVEKIFKELNSYEDFLDARFKTMRKDSLNSSHPISSSVQSSEQIEEMFDSLSYFKGASLLLMLKSYLSEDVFQHAIILYLHNHSYAAIQSDDLWDSFNEVTGKTLDVKKMMKTWTLQKGFPLVTVQRKGTELLLQQERFFPSMQPEIQDSDTSHLWHIPISYVTDGRNYSEYRSVSLLDKKSDVINLTEQVQWVKVNTNMTGYYIVHYAHDGWAALINQLKRNPYVLSDKDRANLINNIFELAGLGKVPLQMAFDLIDYLRNETHTAPITEALFQTDLIYNLLEKLGHMDLSSRLVTRVHKLLQNQIQQQTWTDEGTPSMRELRSALLEFACAHSLENCTTMATKLFDGWMASNGTQSLPTDVMTTVFKVGARTEKGWLFLFSMYSSMGSEAEKDKILEALASSADAHKLYWLMKSSLDGDIIRTQKLSLIIRTVGRQFPGHLLAWDFVKENWNKLVHKFHLGSYTIQSIVAGSTHLFSTKTHLSEVQEFFENQSEATLQLRCVQEAFEVIELNIQWMARNLKTLTLWL.

Met-1 is subject to N-acetylmethionine. At 1–109 (METFTNDRLQ…DGTCSVPSAR (109 aa)) the chain is on the cytoplasmic side. Residues 53 to 54 (LL) carry the Dileucine internalization motif motif. Tyr-70 is subject to Phosphotyrosine. The short motif at 76–77 (LL) is the Dileucine internalization motif element. Phosphoserine; by PKC/PRKCZ; in vitro is present on residues Ser-80 and Ser-91. The tract at residues 96-101 (RQSPDG) is tankyrase binding. The helical; Signal-anchor for type II membrane protein transmembrane segment at 110–131 (TLVICVFVIVVAVSVIMVIYLL) threads the bilayer. At 132–1025 (PRCTFTKEGC…RNLKTLTLWL (894 aa)) the chain is on the extracellular side. N-linked (GlcNAc...) asparagine glycosylation is found at Asn-145, Asn-184, Asn-215, Asn-256, and Asn-266. Glu-295 lines the substrate pocket. Asn-368 and Asn-374 each carry an N-linked (GlcNAc...) asparagine glycan. Position 428-432 (428-432 (GAMEN)) interacts with substrate. An N-linked (GlcNAc...) asparagine glycan is attached at Asn-447. Residue His-464 participates in Zn(2+) binding. Glu-465 acts as the Proton acceptor in catalysis. His-468 and Glu-487 together coordinate Zn(2+). N-linked (GlcNAc...) asparagine glycans are attached at residues Asn-525, Asn-578, Asn-664, Asn-682, Asn-695, Asn-758, Asn-834, Asn-850, and Asn-989.

This sequence belongs to the peptidase M1 family. As to quaternary structure, homodimer. Binds tankyrases 1 and 2. Zn(2+) is required as a cofactor. In terms of processing, N-glycosylated. Highly expressed in heart, brain, spleen, lung, kidney and white adipose tissue. Detected at lower levels in skeletal muscle and liver.

It localises to the cell membrane. It is found in the endomembrane system. It catalyses the reaction Release of an N-terminal amino acid, Cys-|-Xaa-, in which the half-cystine residue is involved in a disulfide loop, notably in oxytocin or vasopressin. Hydrolysis rates on a range of aminoacyl arylamides exceed that for the cystinyl derivative, however.. Release of an N-terminal amino acid, cleave before cysteine, leucine as well as other amino acids. Degrades peptide hormones such as oxytocin, vasopressin and angiotensin III, and plays a role in maintaining homeostasis during pregnancy. May be involved in the inactivation of neuronal peptides in the brain. Cleaves Met-enkephalin and dynorphin. Binds angiotensin IV and may be the angiotensin IV receptor in the brain. The chain is Leucyl-cystinyl aminopeptidase (Lnpep) from Rattus norvegicus (Rat).